Here is a 309-residue protein sequence, read N- to C-terminus: Zinc transporter ZIPB (309 aa).

The Periplasmic portion of the chain corresponds to 1–22; the sequence is MNQPSSLAADLRGAWHAQAQSH. The chain crosses the membrane as a helical span at residues 23 to 50; the sequence is PLITLGLAASAAGVVLLLVAGIVNALTG. Residues 51 to 55 are Extracellular-facing; that stretch reads ENRVH. Residues 56 to 81 traverse the membrane as a helical segment; that stretch reads VGYAVLGGAAGFAATALGALMALGLR. Residues 82–83 are Periplasmic-facing; sequence AI. A helical membrane pass occupies residues 84–119; sequence SARTQDAMLGFAAGMMLAASAFSLILPGLDAAGTIV. Position 89 (Asp-89) interacts with Zn(2+). Residue Met-99 coordinates Cd(2+). The Extracellular portion of the chain corresponds to 120-121; that stretch reads GP. The chain crosses the membrane as a helical span at residues 122 to 145; the sequence is GPAAAAVVALGLGLGVLLMLGLDY. Asp-144 contributes to the Zn(2+) binding site. Asp-144 provides a ligand contact to Cd(2+). The Periplasmic segment spans residues 146–165; that stretch reads FTPHEHERTGHQGPEAARVN. A helical transmembrane segment spans residues 166-190; the sequence is RVWLFVLTIILHNLPEGMAIGVSFA. Residue His-177 coordinates Zn(2+). Cd(2+)-binding residues include His-177, Asn-178, and Glu-181. Glu-181 serves as a coordination point for Zn(2+). At 191–192 the chain is on the extracellular side; that stretch reads TG. A helical membrane pass occupies residues 193–222; that stretch reads DLRIGLPLTSAIAIQDVPEGLAVALALRAV. Gln-207 contacts Zn(2+). Residues Gln-207, Asp-208, and Glu-211 each coordinate Cd(2+). A Zn(2+)-binding site is contributed by Glu-211. Residues 223–224 are Periplasmic-facing; sequence GL. Residues 225-251 form a helical membrane-spanning segment; sequence PIGRAVLVAVASGLMEPLGALVGVGIS. Glu-240 contacts Cd(2+). Over 252-255 the chain is Extracellular; the sequence is SGFA. A helical transmembrane segment spans residues 256–275; it reads LAYPISMGLAAGAMIFVVSH. 3 residues coordinate Zn(2+): His-275, Glu-276, and His-286. A Cd(2+)-binding site is contributed by His-275. Over 276 to 287 the chain is Periplasmic; sequence EVIPETHRNGHE. Residues 288–308 traverse the membrane as a helical segment; sequence TTATVGLMAGFALMMFLDTAL. A topological domain (extracellular) is located at residue Gly-309.

It belongs to the ZIP transporter (TC 2.A.5) family. Homodimer. Also exists as a monomer.

It localises to the cell inner membrane. The enzyme catalyses Zn(2+)(in) = Zn(2+)(out). It catalyses the reaction Cd(2+)(in) = Cd(2+)(out). Its function is as follows. Selective electrodiffusional channel that mediates the uptake of Zn(2+). Exploits in vivo zinc concentration gradients (maintained by cellular zinc homeostasis) to passively move zinc ions into the cytoplasm. ZIPB-mediated zinc flux is dependent upon pH, but independent of the proton motive force. Is also able to import Cd(2+), but is not permeable to Co(2+), Cu(2+), Fe(2+), Mn(2+) and Ni(2+). In Bordetella bronchiseptica (strain ATCC BAA-588 / NCTC 13252 / RB50) (Alcaligenes bronchisepticus), this protein is Zinc transporter ZIPB.